Consider the following 172-residue polypeptide: Adenylate kinase isoenzyme 6 (172 aa).

ATP is bound by residues Gly13, Gly15, Lys16, Thr17, and Thr18. Residues 33 to 56 are NMPbind; that stretch reads NVGDLAREGELYDGFDEEYNCPIL. Residues 108–118 are LID; that stretch reads TRGYSEKKLND. Residues Arg109 and Lys148 each coordinate ATP.

Belongs to the adenylate kinase family. AK6 subfamily. Monomer and homodimer. Interacts with small ribosomal subunit protein uS11. Not a structural component of 43S pre-ribosomes, but transiently interacts with them by binding to uS11. Interacts with COIL (via C-terminus).

Its subcellular location is the cytoplasm. The protein localises to the nucleus. The protein resides in the nucleoplasm. It localises to the cajal body. The catalysed reaction is AMP + ATP = 2 ADP. The enzyme catalyses ATP + H2O = ADP + phosphate + H(+). Its function is as follows. Broad-specificity nucleoside monophosphate (NMP) kinase that catalyzes the reversible transfer of the terminal phosphate group between nucleoside triphosphates and monophosphates. Also has ATPase activity. Involved in the late cytoplasmic maturation steps of the 40S ribosomal particles, specifically 18S rRNA maturation. While NMP activity is not required for ribosome maturation, ATPase activity is. Associates transiently with small ribosomal subunit protein uS11. ATP hydrolysis breaks the interaction with uS11. May temporarily remove uS11 from the ribosome to enable a conformational change of the ribosomal RNA that is needed for the final maturation step of the small ribosomal subunit. Its NMP activity may have a role in nuclear energy homeostasis. May be involved in regulation of Cajal body (CB) formation. In Oryctolagus cuniculus (Rabbit), this protein is Adenylate kinase isoenzyme 6.